A 99-amino-acid polypeptide reads, in one-letter code: Small ribosomal subunit protein bS20 (99 aa).

The protein belongs to the bacterial ribosomal protein bS20 family.

Functionally, binds directly to 16S ribosomal RNA. The protein is Small ribosomal subunit protein bS20 of Prochlorococcus marinus (strain SARG / CCMP1375 / SS120).